Here is a 518-residue protein sequence, read N- to C-terminus: Probable G-protein coupled receptor Mth-like 2 (518 aa).

Residues 1-26 form the signal peptide; it reads MIASSKMLLSASILIYFLLNLQSSSA. Over 27 to 220 the chain is Extracellular; that stretch reads EIADCSFYDT…CLILPSRTGQ (194 aa). Disulfide bonds link cysteine 31/cysteine 85, cysteine 87/cysteine 92, cysteine 96/cysteine 190, cysteine 97/cysteine 108, and cysteine 152/cysteine 211. Residue asparagine 47 is glycosylated (N-linked (GlcNAc...) asparagine). 3 N-linked (GlcNAc...) asparagine glycosylation sites follow: asparagine 111, asparagine 125, and asparagine 201. Residues 221–241 form a helical membrane-spanning segment; the sequence is TVVMITSLICLVLTIAVYLCV. The Cytoplasmic segment spans residues 242–250; it reads KKLMNLEGK. A helical transmembrane segment spans residues 251 to 271; it reads CFICYMMCLFFGYLFLLLDLW. Residues 272–279 are Extracellular-facing; it reads ELSLDFCK. The helical transmembrane segment at 280–300 threads the bilayer; sequence AAGFLGYFFVMAAFFWLSIIS. Residues 301–321 lie on the Cytoplasmic side of the membrane; it reads RHYWKCLTNPCASMNIRSERA. A helical transmembrane segment spans residues 322–342; that stretch reads FLLYSCFAWAMPLALTGVTYL. At 343-371 the chain is on the extracellular side; sequence ADNVVNNEEWQPRVGDEGHCWIYTKSWSA. Residues 372-392 form a helical membrane-spanning segment; sequence MVYFYGPMVLLILFNITMFVL. Residues 393–426 are Cytoplasmic-facing; sequence TAKHIIDSKRTLRKIARNEGRIQKLNSDKQNYTQ. Residues 427-447 traverse the membrane as a helical segment; sequence FLLLFTVMGMSWSFEIFSYLV. Residues 448 to 455 lie on the Extracellular side of the membrane; the sequence is QREKLWVN. Residues 456–476 form a helical membrane-spanning segment; that stretch reads IFLVADYFNWSQGVIIFVLFI. Residues 477-518 are Cytoplasmic-facing; that stretch reads LRRKTLVLFKKQIFPKQRAFSRSATQSTIESISQTKRHFNMT.

This sequence belongs to the G-protein coupled receptor 2 family. Mth subfamily.

It is found in the cell membrane. The chain is Probable G-protein coupled receptor Mth-like 2 (mthl2) from Drosophila melanogaster (Fruit fly).